The following is a 205-amino-acid chain: Cytochrome c biogenesis ATP-binding export protein CcmA 1 (205 aa).

In terms of domain architecture, ABC transporter spans 2–205 (LEARDLYCER…LALTGGEAGL (204 aa)). 34-41 (GGNGAGKT) is an ATP binding site.

The protein belongs to the ABC transporter superfamily. CcmA exporter (TC 3.A.1.107) family. As to quaternary structure, the complex is composed of two ATP-binding proteins (CcmA) and two transmembrane proteins (CcmB).

The protein resides in the cell inner membrane. It catalyses the reaction heme b(in) + ATP + H2O = heme b(out) + ADP + phosphate + H(+). Part of the ABC transporter complex CcmAB involved in the biogenesis of c-type cytochromes; once thought to export heme, this seems not to be the case, but its exact role is uncertain. Responsible for energy coupling to the transport system. The protein is Cytochrome c biogenesis ATP-binding export protein CcmA 1 of Salmonella paratyphi A (strain ATCC 9150 / SARB42).